Consider the following 210-residue polypeptide: ATP-dependent Clp protease proteolytic subunit (210 aa).

Ser106 serves as the catalytic Nucleophile. His131 is a catalytic residue.

Belongs to the peptidase S14 family. Fourteen ClpP subunits assemble into 2 heptameric rings which stack back to back to give a disk-like structure with a central cavity, resembling the structure of eukaryotic proteasomes.

Its subcellular location is the cytoplasm. The catalysed reaction is Hydrolysis of proteins to small peptides in the presence of ATP and magnesium. alpha-casein is the usual test substrate. In the absence of ATP, only oligopeptides shorter than five residues are hydrolyzed (such as succinyl-Leu-Tyr-|-NHMec, and Leu-Tyr-Leu-|-Tyr-Trp, in which cleavage of the -Tyr-|-Leu- and -Tyr-|-Trp bonds also occurs).. Its function is as follows. Cleaves peptides in various proteins in a process that requires ATP hydrolysis. Has a chymotrypsin-like activity. Plays a major role in the degradation of misfolded proteins. The sequence is that of ATP-dependent Clp protease proteolytic subunit from Bartonella tribocorum (strain CIP 105476 / IBS 506).